The primary structure comprises 222 residues: MKKHLLLLALLLSGISPAQALDVGDISSFMNSDSSTLSKTIKNSTDSGRLINIRLERLSSPLDDGQVISMDKPDELLLTPASLLLPAQASEVIRFFYKGPADEKERYYRIVWFDQALSDAQRDNANRSAVATASARIGTILVVAPRQANYHFQYANGTLTNTGNATLRILAYGPCLKAANGKECKENYYLMPGKSRRFTRVDTADNKGRVALWQGDKFIPVK.

An N-terminal signal peptide occupies residues 1 to 20; it reads MKKHLLLLALLLSGISPAQA.

Belongs to the EcpB/EcpE family.

Part of the ecpRABCDE operon, which encodes the E.coli common pilus (ECP). ECP is found in both commensal and pathogenic strains and plays a dual role in early-stage biofilm development and host cell recognition. The sequence is that of Probable fimbrial chaperone EcpB (ecpB) from Escherichia coli O157:H7.